The primary structure comprises 359 residues: Phosphoserine aminotransferase (359 aa).

Arg41 contacts L-glutamate. Residues 75–76 (AS), Trp101, Thr152, Asp171, and Gln194 contribute to the pyridoxal 5'-phosphate site. Lys195 is modified (N6-(pyridoxal phosphate)lysine). Residue 236–237 (NT) participates in pyridoxal 5'-phosphate binding.

Belongs to the class-V pyridoxal-phosphate-dependent aminotransferase family. SerC subfamily. In terms of assembly, homodimer. Pyridoxal 5'-phosphate is required as a cofactor.

It localises to the cytoplasm. The enzyme catalyses O-phospho-L-serine + 2-oxoglutarate = 3-phosphooxypyruvate + L-glutamate. The catalysed reaction is 4-(phosphooxy)-L-threonine + 2-oxoglutarate = (R)-3-hydroxy-2-oxo-4-phosphooxybutanoate + L-glutamate. The protein operates within amino-acid biosynthesis; L-serine biosynthesis; L-serine from 3-phospho-D-glycerate: step 2/3. Its pathway is cofactor biosynthesis; pyridoxine 5'-phosphate biosynthesis; pyridoxine 5'-phosphate from D-erythrose 4-phosphate: step 3/5. Functionally, catalyzes the reversible conversion of 3-phosphohydroxypyruvate to phosphoserine and of 3-hydroxy-2-oxo-4-phosphonooxybutanoate to phosphohydroxythreonine. The polypeptide is Phosphoserine aminotransferase (Acinetobacter baumannii (strain ACICU)).